The sequence spans 260 residues: HMP-PP phosphatase (260 aa).

The Nucleophile role is filled by aspartate 8. 3 residues coordinate Mg(2+): aspartate 8, aspartate 10, and aspartate 212.

This sequence belongs to the HAD-like hydrolase superfamily. Cof family. The cofactor is Mg(2+).

The enzyme catalyses 4-amino-2-methyl-5-(diphosphooxymethyl)pyrimidine + H2O = 4-amino-2-methyl-5-(phosphooxymethyl)pyrimidine + phosphate + H(+). In terms of biological role, catalyzes the hydrolysis of 4-amino-2-methyl-5-hydroxymethylpyrimidine pyrophosphate (HMP-PP) to 4-amino-2-methyl-5-hydroxymethylpyrimidine phosphate (HMP-P). The chain is HMP-PP phosphatase from Shigella boydii serotype 4 (strain Sb227).